The sequence spans 206 residues: N-(5'-phosphoribosyl)anthranilate isomerase (206 aa).

It belongs to the TrpF family.

It catalyses the reaction N-(5-phospho-beta-D-ribosyl)anthranilate = 1-(2-carboxyphenylamino)-1-deoxy-D-ribulose 5-phosphate. It functions in the pathway amino-acid biosynthesis; L-tryptophan biosynthesis; L-tryptophan from chorismate: step 3/5. This Pseudomonas putida (strain W619) protein is N-(5'-phosphoribosyl)anthranilate isomerase.